A 756-amino-acid polypeptide reads, in one-letter code: Polyribonucleotide nucleotidyltransferase (756 aa).

Mg(2+) is bound by residues Asp-527 and Asp-533. Residues 593–652 form the KH domain; sequence PRITTIKVPVDKIGEVIGPKGKMINSITEETGASISIEDDGTVFVGASNGEAAQAAIDKI. Positions 664-733 constitute an S1 motif domain; it reads GERFLGTVVK…NRGKISLVLV (70 aa).

Belongs to the polyribonucleotide nucleotidyltransferase family. It depends on Mg(2+) as a cofactor.

Its subcellular location is the cytoplasm. The enzyme catalyses RNA(n+1) + phosphate = RNA(n) + a ribonucleoside 5'-diphosphate. Its function is as follows. Involved in mRNA degradation. Catalyzes the phosphorolysis of single-stranded polyribonucleotides processively in the 3'- to 5'-direction. This is Polyribonucleotide nucleotidyltransferase from Mycolicibacterium gilvum (strain PYR-GCK) (Mycobacterium gilvum (strain PYR-GCK)).